Consider the following 274-residue polypeptide: 4-diphosphocytidyl-2-C-methyl-D-erythritol kinase (274 aa).

Residue lysine 8 is part of the active site. ATP is bound at residue 94-104 (PSGAGLGGGSA). Aspartate 136 is a catalytic residue.

The protein belongs to the GHMP kinase family. IspE subfamily.

The enzyme catalyses 4-CDP-2-C-methyl-D-erythritol + ATP = 4-CDP-2-C-methyl-D-erythritol 2-phosphate + ADP + H(+). It participates in isoprenoid biosynthesis; isopentenyl diphosphate biosynthesis via DXP pathway; isopentenyl diphosphate from 1-deoxy-D-xylulose 5-phosphate: step 3/6. Functionally, catalyzes the phosphorylation of the position 2 hydroxy group of 4-diphosphocytidyl-2C-methyl-D-erythritol. This is 4-diphosphocytidyl-2-C-methyl-D-erythritol kinase from Bacteroides fragilis (strain YCH46).